Consider the following 987-residue polypeptide: Collagen alpha-1(I) chain (987 aa).

A disordered region spans residues 1–987; that stretch reads GPMGPSGPRG…PGPPGPPGPP (987 aa). A compositionally biased stretch (low complexity) spans 20–39; sequence PQGFQGPPGEPGEPGASGPM. Over residues 51–65 the composition is skewed to basic and acidic residues; it reads NGDDGEAGKPGRPGE. The residue at position 93 (Ser93) is a Phosphoserine. 2 stretches are compositionally biased toward low complexity: residues 101–117 and 141–153; these read DAGP…PGEN and AGAR…TGAA. Residues 155-167 show a composition bias toward pro residues; that stretch reads PPGPTGPAGPPGF. Composition is skewed to low complexity over residues 201–251, 354–380, 389–408, 422–444, 516–543, 602–614, 627–654, 662–677, 686–696, and 737–752; these read AGAA…APGP, KGIT…QDGR, ARGQ…AGEP, AVGA…AGPA, NGAP…PGIQ, PNGP…ARGA, AGFA…KGDA, PTGA…APGP, ATGFPGAAGRV, and SGEK…AGAP. The span at 756 to 765 shows a compositional bias: gly residues; the sequence is GPQGIGGQRG. Positions 799-809 are enriched in pro residues; it reads PPGPMGPPGIA. Residues 811-826 are compositionally biased toward low complexity; it reads PPGESGREGSPGAEGS. A compositionally biased stretch (pro residues) spans 845-860; sequence AGPPGAPGAPGAPGPV. The span at 896–907 shows a compositional bias: basic and acidic residues; it reads RGDKGETGEQGD. Over residues 923–956 the composition is skewed to low complexity; sequence PGEQGPSGASGPAGPRGPPGSAGAPGKDGINGIP. Positions 972–987 are enriched in pro residues; that stretch reads VGPPGPPGPPGPPGPP.

Belongs to the fibrillar collagen family. Trimers of one alpha 2(I) and two alpha 1(I) chains. In terms of processing, prolines at the third position of the tripeptide repeating unit (G-X-Y) are hydroxylated in some or all of the chains. In terms of tissue distribution, forms the fibrils of tendon, ligaments and bones. In bones, the fibrils are mineralized with calcium hydroxyapatite.

The protein localises to the secreted. It is found in the extracellular space. Its subcellular location is the extracellular matrix. Type I collagen is a member of group I collagen (fibrillar forming collagen). The polypeptide is Collagen alpha-1(I) chain (Orycteropus afer (Aardvark)).